The primary structure comprises 679 residues: Genome polyprotein (679 aa).

A propeptide spans 1-14 (SAGMIIMLIPTVMA) (ER anchor for the capsid protein C, removed in mature form by serine protease NS3). The helical transmembrane segment at 2-22 (AGMIIMLIPTVMAFHLTTRNG) threads the bilayer. At 23 to 138 (EPHMIVSRQE…GAWKHAQRIE (116 aa)) the chain is on the extracellular side. An N-linked (GlcNAc...) asparagine; by host glycan is attached at Asn-83. Residues 139 to 159 (IWILRHPGFTIMAAILAYTIG) form a helical membrane-spanning segment. The Cytoplasmic segment spans residues 160–165 (TTHFQR). The chain crosses the membrane as a helical span at residues 166-180 (ALIFILLTAVAPSMT). At 181 to 625 (MRCIGISNRD…LHQVFGAIYG (445 aa)) the chain is on the extracellular side. 4 disulfide bridges follow: Cys-183-Cys-210, Cys-240-Cys-301, Cys-254-Cys-285, and Cys-272-Cys-296. Residue Asn-247 is glycosylated (N-linked (GlcNAc...) asparagine; by host). A fusion peptide region spans residues 278 to 291 (DRGWGNGCGLFGKG). N-linked (GlcNAc...) asparagine; by host glycosylation is present at Asn-333. Intrachain disulfides connect Cys-365/Cys-465 and Cys-482/Cys-513. A helical membrane pass occupies residues 626-646 (AAFSGVSWTMKILIGVIITWI). The Cytoplasmic portion of the chain corresponds to 647-652 (GMNSRS). A helical transmembrane segment spans residues 653–673 (TSLSVSLVLVGIVTLYLGVMV). Topologically, residues 674 to 679 (QADSGC) are extracellular.

As to quaternary structure, forms heterodimers with envelope protein E in the endoplasmic reticulum and Golgi. Homodimer; in the endoplasmic reticulum and Golgi. Interacts with protein prM. Interacts with non-structural protein 1. Post-translationally, cleaved in post-Golgi vesicles by a host furin, releasing the mature small envelope protein M, and peptide pr. This cleavage is incomplete as up to 30% of viral particles still carry uncleaved prM. In terms of processing, N-glycosylated. N-glycosylated. The excreted form is glycosylated and this is required for efficient secretion of the protein from infected cells. Post-translationally, specific enzymatic cleavages in vivo yield mature proteins. Cleavages in the lumen of endoplasmic reticulum are performed by host signal peptidase, wereas cleavages in the cytoplasmic side are performed by serine protease NS3. Signal cleavage at the 2K-4B site requires a prior NS3 protease-mediated cleavage at the 4A-2K site.

The protein localises to the secreted. The protein resides in the virion membrane. It localises to the host endoplasmic reticulum membrane. Prevents premature fusion activity of envelope proteins in trans-Golgi by binding to envelope protein E at pH6.0. After virion release in extracellular space, gets dissociated from E dimers. In terms of biological role, acts as a chaperone for envelope protein E during intracellular virion assembly by masking and inactivating envelope protein E fusion peptide. prM is the only viral peptide matured by host furin in the trans-Golgi network probably to avoid catastrophic activation of the viral fusion activity in acidic Golgi compartment prior to virion release. prM-E cleavage is inefficient, and many virions are only partially matured. These uncleaved prM would play a role in immune evasion. Its function is as follows. May play a role in virus budding. Exerts cytotoxic effects by activating a mitochondrial apoptotic pathway through M ectodomain. May display a viroporin activity. Functionally, binds to host cell surface receptor and mediates fusion between viral and cellular membranes. Envelope protein is synthesized in the endoplasmic reticulum in the form of heterodimer with protein prM. They play a role in virion budding in the ER, and the newly formed immature particle is covered with 60 spikes composed of heterodimer between precursor prM and envelope protein E. The virion is transported to the Golgi apparatus where the low pH causes dissociation of PrM-E heterodimers and formation of E homodimers. prM-E cleavage is inefficient, and many virions are only partially matured. These uncleaved prM would play a role in immune evasion. Involved in immune evasion, pathogenesis and viral replication. Once cleaved off the polyprotein, is targeted to three destinations: the viral replication cycle, the plasma membrane and the extracellular compartment. Essential for viral replication. Required for formation of the replication complex and recruitment of other non-structural proteins to the ER-derived membrane structures. Excreted as a hexameric lipoparticle that plays a role against host immune response. Antagonizing the complement function. Binds to the host macrophages and dendritic cells. Inhibits signal transduction originating from Toll-like receptor 3 (TLR3). In terms of biological role, disrupts the host endothelial glycocalyx layer of host pulmonary microvascular endothelial cells, inducing degradation of sialic acid and shedding of heparan sulfate proteoglycans. NS1 induces expression of sialidases, heparanase, and activates cathepsin L, which activates heparanase via enzymatic cleavage. These effects are probably linked to the endothelial hyperpermeability observed in severe dengue disease. The chain is Genome polyprotein from Dengue virus type 2 (strain Thailand/PUO-218/1980) (DENV-2).